The following is a 294-amino-acid chain: Elongation factor Ts (294 aa).

The segment at 81–84 (TDFV) is involved in Mg(2+) ion dislocation from EF-Tu.

This sequence belongs to the EF-Ts family.

The protein resides in the cytoplasm. Associates with the EF-Tu.GDP complex and induces the exchange of GDP to GTP. It remains bound to the aminoacyl-tRNA.EF-Tu.GTP complex up to the GTP hydrolysis stage on the ribosome. This is Elongation factor Ts from Levilactobacillus brevis (strain ATCC 367 / BCRC 12310 / CIP 105137 / JCM 1170 / LMG 11437 / NCIMB 947 / NCTC 947) (Lactobacillus brevis).